The following is a 520-amino-acid chain: Ribonuclease Y (520 aa).

A helical transmembrane segment spans residues Thr4–Val24. The tract at residues Lys86–Glu116 is disordered. One can recognise a KH domain in the interval Thr210 to Leu273. In terms of domain architecture, HD spans Val336–Ala429.

Belongs to the RNase Y family.

The protein localises to the cell membrane. In terms of biological role, endoribonuclease that initiates mRNA decay. The chain is Ribonuclease Y from Bacillus cereus (strain ATCC 10987 / NRS 248).